The chain runs to 356 residues: tRNA-specific 2-thiouridylase MnmA (356 aa).

ATP is bound by residues 6–13 (GMSGGVDS) and L32. Catalysis depends on C102, which acts as the Nucleophile. C102 and C200 are joined by a disulfide. Residue G127 coordinates ATP. An interaction with tRNA region spans residues 150 to 152 (RDQ). C200 (cysteine persulfide intermediate) is an active-site residue. Residues 302–303 (RY) are interaction with tRNA.

Belongs to the MnmA/TRMU family.

The protein resides in the cytoplasm. It carries out the reaction S-sulfanyl-L-cysteinyl-[protein] + uridine(34) in tRNA + AH2 + ATP = 2-thiouridine(34) in tRNA + L-cysteinyl-[protein] + A + AMP + diphosphate + H(+). In terms of biological role, catalyzes the 2-thiolation of uridine at the wobble position (U34) of tRNA, leading to the formation of s(2)U34. In Aquifex aeolicus (strain VF5), this protein is tRNA-specific 2-thiouridylase MnmA.